Here is a 550-residue protein sequence, read N- to C-terminus: Glucose-6-phosphate isomerase (550 aa).

The active-site Proton donor is Glu-356. Catalysis depends on residues His-387 and Lys-515.

The protein belongs to the GPI family.

It is found in the cytoplasm. The catalysed reaction is alpha-D-glucose 6-phosphate = beta-D-fructose 6-phosphate. It functions in the pathway carbohydrate biosynthesis; gluconeogenesis. It participates in carbohydrate degradation; glycolysis; D-glyceraldehyde 3-phosphate and glycerone phosphate from D-glucose: step 2/4. Functionally, catalyzes the reversible isomerization of glucose-6-phosphate to fructose-6-phosphate. The chain is Glucose-6-phosphate isomerase from Syntrophobacter fumaroxidans (strain DSM 10017 / MPOB).